Reading from the N-terminus, the 334-residue chain is Ferrochelatase (334 aa).

Residues histidine 207 and glutamate 288 each contribute to the Fe cation site.

It belongs to the ferrochelatase family.

It localises to the cytoplasm. It catalyses the reaction heme b + 2 H(+) = protoporphyrin IX + Fe(2+). Its pathway is porphyrin-containing compound metabolism; protoheme biosynthesis; protoheme from protoporphyrin-IX: step 1/1. Catalyzes the ferrous insertion into protoporphyrin IX. This chain is Ferrochelatase, found in Helicobacter pylori (strain P12).